The following is a 466-amino-acid chain: Methylenetetrahydrofolate--tRNA-(uracil-5-)-methyltransferase TrmFO (466 aa).

Position 14-19 (14-19) interacts with FAD; that stretch reads GGGLAG.

The protein belongs to the MnmG family. TrmFO subfamily. It depends on FAD as a cofactor.

Its subcellular location is the cytoplasm. It catalyses the reaction uridine(54) in tRNA + (6R)-5,10-methylene-5,6,7,8-tetrahydrofolate + NADH + H(+) = 5-methyluridine(54) in tRNA + (6S)-5,6,7,8-tetrahydrofolate + NAD(+). It carries out the reaction uridine(54) in tRNA + (6R)-5,10-methylene-5,6,7,8-tetrahydrofolate + NADPH + H(+) = 5-methyluridine(54) in tRNA + (6S)-5,6,7,8-tetrahydrofolate + NADP(+). Catalyzes the folate-dependent formation of 5-methyl-uridine at position 54 (M-5-U54) in all tRNAs. This is Methylenetetrahydrofolate--tRNA-(uracil-5-)-methyltransferase TrmFO from Brucella suis (strain ATCC 23445 / NCTC 10510).